A 629-amino-acid polypeptide reads, in one-letter code: Hemocyanin C chain (629 aa).

Cu cation contacts are provided by His-175, His-179, His-206, His-326, His-330, and His-366. N-linked (GlcNAc...) asparagine glycosylation is present at Asn-451. The cysteines at positions 537 and 585 are disulfide-linked. N-linked (GlcNAc...) asparagine glycosylation is present at Asn-618.

Belongs to the tyrosinase family. Hemocyanin subfamily. As to quaternary structure, tarantula hemocyanin is a 24-chain polymer with seven different chains identified. In terms of tissue distribution, hemolymph.

The protein resides in the secreted. It localises to the extracellular space. Functionally, hemocyanins are copper-containing oxygen carriers occurring freely dissolved in the hemolymph of many mollusks and arthropods. The protein is Hemocyanin C chain (HCC) of Aphonopelma sp. (American tarantula).